The following is a 90-amino-acid chain: Large ribosomal subunit protein eL37 (90 aa).

The A20-type zinc-finger motif lies at 13–46 (NKSHTLCNRCGRRSFHVQKKTCSSCGYPAAKMRS). 4 residues coordinate Zn(2+): C19, C22, C34, and C37.

This sequence belongs to the eukaryotic ribosomal protein eL37 family. In terms of assembly, component of the large ribosomal subunit. Mature ribosomes consist of a small (40S) and a large (60S) subunit. The 40S subunit contains about 32 different proteins and 1 molecule of RNA (18S). The 60S subunit contains 45 different proteins and 3 molecules of RNA (25S, 5.8S and 5S). Zn(2+) serves as cofactor.

Its subcellular location is the cytoplasm. Component of the ribosome, a large ribonucleoprotein complex responsible for the synthesis of proteins in the cell. The small ribosomal subunit (SSU) binds messenger RNAs (mRNAs) and translates the encoded message by selecting cognate aminoacyl-transfer RNA (tRNA) molecules. The large subunit (LSU) contains the ribosomal catalytic site termed the peptidyl transferase center (PTC), which catalyzes the formation of peptide bonds, thereby polymerizing the amino acids delivered by tRNAs into a polypeptide chain. The nascent polypeptides leave the ribosome through a tunnel in the LSU and interact with protein factors that function in enzymatic processing, targeting, and the membrane insertion of nascent chains at the exit of the ribosomal tunnel. The chain is Large ribosomal subunit protein eL37 from Candida albicans (strain SC5314 / ATCC MYA-2876) (Yeast).